We begin with the raw amino-acid sequence, 641 residues long: Fructose-1,6-bisphosphatase class 3 (641 aa).

It belongs to the FBPase class 3 family. Mn(2+) serves as cofactor.

The catalysed reaction is beta-D-fructose 1,6-bisphosphate + H2O = beta-D-fructose 6-phosphate + phosphate. It functions in the pathway carbohydrate biosynthesis; gluconeogenesis. The chain is Fructose-1,6-bisphosphatase class 3 from Ligilactobacillus salivarius (strain UCC118) (Lactobacillus salivarius).